Here is a 343-residue protein sequence, read N- to C-terminus: Serpentine receptor class alpha-11 (343 aa).

Residues 1-24 (MSSPDTPVCASPQQMEMYNSHFYT) are Extracellular-facing. A helical transmembrane segment spans residues 25–45 (CALFFNLLIAFTSMTLIIMAI). Over 46–60 (RKLLTESIINTSTRM) the chain is Cytoplasmic. The chain crosses the membrane as a helical span at residues 61-81 (FLIVGLLCCSLHQTAYIVLRV). The Extracellular portion of the chain corresponds to 82-106 (QVIFQILFKLDQPCKLYYKAYDCKY). The chain crosses the membrane as a helical span at residues 107 to 127 (VTFSLVAGNTGMIFIQSAMTI). The Cytoplasmic segment spans residues 128 to 146 (DRILTTVFTNLWPKLKYWP). A helical transmembrane segment spans residues 147-167 (GVILSSFMIGCNFTNVQFIFW). Residues 168 to 192 (NDPLTDYVPTCGQFPPKSVGRFQKF) lie on the Extracellular side of the membrane. Residues 193-213 (LEIALYMSLAHMVINVIILYI) traverse the membrane as a helical segment. Residues 214–247 (NVVQDRRQRLVSTHDQSQSFDVNQRFQSRVALKS) lie on the Cytoplasmic side of the membrane. A helical membrane pass occupies residues 248 to 268 (TQAIFFLSMSQFLSCFLYTIF). Over 269–291 (TKLYLTLQPDMTPLQSGLTLALT) the chain is Extracellular. The helical transmembrane segment at 292–312 (YTTPYACIAIPSLIMVTLTFI) threads the bilayer. Over 313–343 (RNQRHRSINALRSQTETGDQYMQKIKKIWDK) the chain is Cytoplasmic.

The protein belongs to the nematode receptor-like protein sra family.

The protein localises to the membrane. A G protein-coupled receptor required for olfactory imprinting a requisite in ordorant response such as benzaldehyde and isoamylalcohol. The chain is Serpentine receptor class alpha-11 from Caenorhabditis briggsae.